The sequence spans 312 residues: Transcription initiation factor IIB (312 aa).

The TFIIB-type zinc finger occupies 10-42 (FVQTCSDCGETQNIVEDYKNGYHVCGRCGCIVG). Zn(2+) contacts are provided by C14, C17, C34, and C37. 2 consecutive repeat copies span residues 120–196 (FCER…LISP) and 213–290 (FCSD…ELLT).

It belongs to the TFIIB family. As to quaternary structure, associates with TFIID-IIA (DA complex) to form TFIID-IIA-IIB (DAB-complex) which is then recognized by polymerase II.

The protein localises to the nucleus. Functionally, general factor that plays a major role in the activation of eukaryotic genes transcribed by RNA polymerase II. The sequence is that of Transcription initiation factor IIB from Encephalitozoon cuniculi (strain GB-M1) (Microsporidian parasite).